Reading from the N-terminus, the 420-residue chain is MTEAAAQPHALPADAPDIAPERDLLSKFDGLIAERQKLLDSGVTDPFAIVMEQVKSPTEAVIRGKDTILLGTYNYMGMTFDPDVIAAGKEALEKFGSGTNGSRMLNGTFHDHMEVEQALRDFYGTTGAIVFSTGYMANLGIISTLAGKGEYVILDADSHASIYDGCQQGNAEIVRFRHNSVEDLDKRLGRLPKEPAKLVVLEGVYSMLGDIAPLKEMVAVAKKHGAMVLVDEAHSMGFFGPNGRGVYEAQGLEGQIDFVVGTFSKSVGTVGGFVVSNHPKFEAVRLACRPYIFTASLPPSVVATATTSIRKLMTAHEKRERLWSNARALHGGLKAMGFRLGTETCDSAIVAVMLEDQEQAAMMWQALLDGGLYVNMARPPATPAGTFLLRCSICAEHTPAQIQTVLGMFQAAGRAVGVIG.

Pyridoxal 5'-phosphate is bound by residues 134 to 135, His234, Thr262, and Ser264; that span reads GY. The residue at position 265 (Lys265) is an N6-(pyridoxal phosphate)lysine.

The protein belongs to the class-II pyridoxal-phosphate-dependent aminotransferase family. Homodimer. Requires pyridoxal 5'-phosphate as cofactor.

Its subcellular location is the cytoplasm. The catalysed reaction is L-serine + hexadecanoyl-CoA + H(+) = 3-oxosphinganine + CO2 + CoA. Its pathway is lipid metabolism; sphingolipid metabolism. Not inhibited by relatively high concentrations of palmitoyl-CoA. Inhibited by both D-cycloserine (DCS) and L-cycloserine (LCS), which inactivate SPT by transamination to form a free pyridoxamine 5'-phosphate (PMP) and beta-aminooxyacetaldehyde that remain bound at the active site. Inhibition is reversed by incubation with excess pyridoxal phosphate. Inhibited by the fungal natural product myriocin, which acts as a competitive inhibitor for both L-serine and palmitoyl-CoA substrates. Its function is as follows. Catalyzes the condensation of L-serine with palmitoyl-CoA (hexadecanoyl-CoA) to produce 3-oxosphinganine. Exhibits a broad substrate specificity concerning the chain length and the degree of unsaturation of acyl-CoA. The polypeptide is Serine palmitoyltransferase (Sphingomonas paucimobilis (Pseudomonas paucimobilis)).